A 440-amino-acid chain; its full sequence is Tyrosine--tRNA ligase (440 aa).

Residue tyrosine 46 participates in L-tyrosine binding. The 'HIGH' region motif lies at proline 51–asparagine 60. Positions 181 and 185 each coordinate L-tyrosine. A 'KMSKS' region motif is present at residues lysine 241 to serine 245. Lysine 244 serves as a coordination point for ATP. Residues aspartate 373 to glycine 430 form the S4 RNA-binding domain.

This sequence belongs to the class-I aminoacyl-tRNA synthetase family. TyrS type 1 subfamily. In terms of assembly, homodimer.

It localises to the cytoplasm. The enzyme catalyses tRNA(Tyr) + L-tyrosine + ATP = L-tyrosyl-tRNA(Tyr) + AMP + diphosphate + H(+). Catalyzes the attachment of tyrosine to tRNA(Tyr) in a two-step reaction: tyrosine is first activated by ATP to form Tyr-AMP and then transferred to the acceptor end of tRNA(Tyr). This chain is Tyrosine--tRNA ligase, found in Bifidobacterium animalis subsp. lactis (strain AD011).